Reading from the N-terminus, the 345-residue chain is N-acetyl-gamma-glutamyl-phosphate reductase (345 aa).

Residue Cys-149 is part of the active site.

The protein belongs to the NAGSA dehydrogenase family. Type 1 subfamily.

It is found in the cytoplasm. The enzyme catalyses N-acetyl-L-glutamate 5-semialdehyde + phosphate + NADP(+) = N-acetyl-L-glutamyl 5-phosphate + NADPH + H(+). It participates in amino-acid biosynthesis; L-arginine biosynthesis; N(2)-acetyl-L-ornithine from L-glutamate: step 3/4. Its function is as follows. Catalyzes the NADPH-dependent reduction of N-acetyl-5-glutamyl phosphate to yield N-acetyl-L-glutamate 5-semialdehyde. This is N-acetyl-gamma-glutamyl-phosphate reductase from Bacillus cereus (strain AH187).